Reading from the N-terminus, the 297-residue chain is MTFKRFSPLSSTSRYARLLAVASGLVAAAALATPSAVAAPEAESKATVSQLADASSAILAADVAGTAWYTEASTGKIVLTADSTVSKAELAKVSNALAGSKAKLTVKRAEGKFTPLIAGGEAITTGGSRCSLGFNVSVNGVAHALTAGHCTNISASWSIGTRTGTSFPNNDYGIIRHSNPAAADGRVYLYNGSYQDITTAGNAFVGQAVQRSGSTTGLRSGSVTGLNATVNYGSSGIVYGMIQTNVCAEPGDSGGSLFAGSTALGLTSGGSGNCRTGGTTFYQPVTEALSAYGATVL.

The signal sequence occupies residues 1 to 38 (MTFKRFSPLSSTSRYARLLAVASGLVAAAALATPSAVA). A propeptide spanning residues 39–115 (APEAESKATV…VKRAEGKFTP (77 aa)) is cleaved from the precursor. Cys130 and Cys150 are oxidised to a cystine. Active-site charge relay system residues include His149, Asp171, and Ser253. Cys247 and Cys274 are oxidised to a cystine.

The protein belongs to the peptidase S1 family. Monomer.

It catalyses the reaction Hydrolysis of proteins with specificity similar to chymotrypsin.. In terms of biological role, has a primary specificity for large aliphatic or aromatic amino acids. The sequence is that of Streptogrisin-A (sprA) from Streptomyces griseus.